Reading from the N-terminus, the 64-residue chain is DNA-binding protein 7b (64 aa).

Lysine 5 and lysine 7 each carry N6-methyllysine.

This sequence belongs to the 7 kDa DNA-binding/endoribonuclease P2 family. In terms of assembly, monomer. In terms of processing, lys-5 and Lys-7 may be methylated.

Its subcellular location is the cytoplasm. In terms of biological role, can constrain negative DNA supercoils. May be involved in maintaining the integrity of the genome at high temperature. This Saccharolobus shibatae (strain ATCC 51178 / DSM 5389 / JCM 8931 / NBRC 15437 / B12) (Sulfolobus shibatae) protein is DNA-binding protein 7b.